Here is a 193-residue protein sequence, read N- to C-terminus: Xanthine phosphoribosyltransferase (193 aa).

2 residues coordinate xanthine: Leu-20 and Thr-27. 128 to 132 (ANGQA) serves as a coordination point for 5-phospho-alpha-D-ribose 1-diphosphate. Position 156 (Lys-156) interacts with xanthine.

The protein belongs to the purine/pyrimidine phosphoribosyltransferase family. Xpt subfamily. Homodimer.

Its subcellular location is the cytoplasm. It carries out the reaction XMP + diphosphate = xanthine + 5-phospho-alpha-D-ribose 1-diphosphate. It participates in purine metabolism; XMP biosynthesis via salvage pathway; XMP from xanthine: step 1/1. In terms of biological role, converts the preformed base xanthine, a product of nucleic acid breakdown, to xanthosine 5'-monophosphate (XMP), so it can be reused for RNA or DNA synthesis. The chain is Xanthine phosphoribosyltransferase from Streptococcus pneumoniae serotype 19F (strain G54).